The chain runs to 317 residues: tRNA pseudouridine synthase B (317 aa).

The Nucleophile role is filled by aspartate 47.

Belongs to the pseudouridine synthase TruB family. Type 1 subfamily.

It carries out the reaction uridine(55) in tRNA = pseudouridine(55) in tRNA. Functionally, responsible for synthesis of pseudouridine from uracil-55 in the psi GC loop of transfer RNAs. This chain is tRNA pseudouridine synthase B, found in Shewanella sp. (strain MR-4).